A 323-amino-acid polypeptide reads, in one-letter code: Thymidylate synthase (323 aa).

DUMP-binding positions include arginine 21 and 172-173; that span reads RR. The active-site Nucleophile is the cysteine 192. Residues 214–217, asparagine 225, and 255–257 contribute to the dUMP site; these read RSND and HVY. Position 217 (aspartate 217) interacts with (6R)-5,10-methylene-5,6,7,8-tetrahydrofolate. Alanine 322 is a binding site for (6R)-5,10-methylene-5,6,7,8-tetrahydrofolate.

The protein belongs to the thymidylate synthase family. Bacterial-type ThyA subfamily. In terms of assembly, homodimer.

It is found in the cytoplasm. It catalyses the reaction dUMP + (6R)-5,10-methylene-5,6,7,8-tetrahydrofolate = 7,8-dihydrofolate + dTMP. It participates in pyrimidine metabolism; dTTP biosynthesis. Functionally, catalyzes the reductive methylation of 2'-deoxyuridine-5'-monophosphate (dUMP) to 2'-deoxythymidine-5'-monophosphate (dTMP) while utilizing 5,10-methylenetetrahydrofolate (mTHF) as the methyl donor and reductant in the reaction, yielding dihydrofolate (DHF) as a by-product. This enzymatic reaction provides an intracellular de novo source of dTMP, an essential precursor for DNA biosynthesis. The protein is Thymidylate synthase of Pseudomonas putida (strain ATCC 47054 / DSM 6125 / CFBP 8728 / NCIMB 11950 / KT2440).